Reading from the N-terminus, the 187-residue chain is ECF RNA polymerase sigma factor SigW (187 aa).

Residues 3 to 95 (MMIKKRIKQV…RKKKPDYYLD (93 aa)) are sigma-70 factor domain-2. The Polymerase core binding motif lies at 47–50 (DIAQ). The segment at 125 to 187 (ELSNTIQQKI…EALRKQLRDL (63 aa)) is sigma-70 factor domain-4. Positions 166 to 184 (VGTVKTRIHRGREALRKQL) form a DNA-binding region, H-T-H motif.

It belongs to the sigma-70 factor family. ECF subfamily. In terms of assembly, interacts transiently with the RNA polymerase catalytic core formed by RpoA, RpoB, RpoC and RpoZ (2 alpha, 1 beta, 1 beta' and 1 omega subunit) to form the RNA polymerase holoenzyme that can initiate transcription. Forms a heterodimer with cognate anti-sigma factor RsiW, which prevents it from binding to the -10 and -35 promoter elements.

Extracytoplasmic function (ECF) sigma factors are held in an inactive form by a cognate anti-sigma factor (RsiW for this protein) until released by regulated membrane proteolysis (RIP). RIP occurs when an extracytoplasmic signal (envelope stress) triggers a concerted proteolytic cascade to transmit information and elicit cellular responses. The anti-sigma factor RsiW is a membrane protein, binding sigma-W in the cytoplasm. RsiW is first cut extracytoplasmically (site-1 protease, S1P, by PrsW), then within the membrane itself (site-2 protease, S2P, by RasP), while cytoplasmic proteases (predominantly ClpX-ClpP) finish degrading the regulatory protein, liberating sigma-W. Sigma factors are initiation factors that promote the attachment of RNA polymerase (RNAP) to specific initiation sites and are then released. Sigma-W controls genes involved in response to cell envelope stress such as antimicrobial peptides, alkaline pH, transport processes and detoxification. The protein is ECF RNA polymerase sigma factor SigW (sigW) of Bacillus subtilis (strain 168).